An 878-amino-acid chain; its full sequence is Aconitate hydratase A (878 aa).

The [4Fe-4S] cluster site is built by Cys426, Cys492, and Cys495.

It belongs to the aconitase/IPM isomerase family. Monomer. Requires [4Fe-4S] cluster as cofactor.

It carries out the reaction citrate = D-threo-isocitrate. It catalyses the reaction (2S,3R)-3-hydroxybutane-1,2,3-tricarboxylate = 2-methyl-cis-aconitate + H2O. Its pathway is carbohydrate metabolism; tricarboxylic acid cycle; isocitrate from oxaloacetate: step 2/2. The protein operates within organic acid metabolism; propanoate degradation. In terms of biological role, involved in the catabolism of short chain fatty acids (SCFA) via the tricarboxylic acid (TCA)(acetyl degradation route) and probably the 2-methylcitrate cycle I (propionate degradation route). Catalyzes the reversible isomerization of citrate to isocitrate via cis-aconitate. Could catalyze the hydration of 2-methyl-cis-aconitate to yield (2R,3S)-2-methylisocitrate. The apo form of AcnA functions as a RNA-binding regulatory protein. The polypeptide is Aconitate hydratase A (acnA) (Rickettsia felis (strain ATCC VR-1525 / URRWXCal2) (Rickettsia azadi)).